A 137-amino-acid polypeptide reads, in one-letter code: Large ribosomal subunit protein uL16 (137 aa).

It belongs to the universal ribosomal protein uL16 family. In terms of assembly, part of the 50S ribosomal subunit.

Functionally, binds 23S rRNA and is also seen to make contacts with the A and possibly P site tRNAs. The protein is Large ribosomal subunit protein uL16 of Pseudomonas syringae pv. tomato (strain ATCC BAA-871 / DC3000).